Consider the following 218-residue polypeptide: NADH-ubiquinone oxidoreductase 21 kDa subunit, mitochondrial (218 aa).

The N-terminal 33 residues, 1–33 (MSALRITTASAARMLRTSNAMMPSVMGAAQRRA), are a transit peptide targeting the mitochondrion. Residues 31–74 (RRALSDSAEPARVPSVESARVPEKLAKEDSPLATPKRNSPDYNV) are disordered. The segment covering 50–60 (RVPEKLAKEDS) has biased composition (basic and acidic residues).

It belongs to the complex I NDUFS4 subunit family. In terms of assembly, complex I is composed of about 40 different subunits. This is a component of the iron-sulfur (IP) fragment of the enzyme.

It localises to the mitochondrion inner membrane. Accessory subunit of the mitochondrial membrane respiratory chain NADH dehydrogenase (Complex I), that is believed not to be involved in catalysis. Complex I functions in the transfer of electrons from NADH to the respiratory chain. The immediate electron acceptor for the enzyme is believed to be ubiquinone. This is NADH-ubiquinone oxidoreductase 21 kDa subunit, mitochondrial (nuo-21) from Neurospora crassa (strain ATCC 24698 / 74-OR23-1A / CBS 708.71 / DSM 1257 / FGSC 987).